Consider the following 243-residue polypeptide: Pyridoxine 5'-phosphate synthase (243 aa).

Asparagine 9 contributes to the 3-amino-2-oxopropyl phosphate binding site. Residue 11–12 (DH) coordinates 1-deoxy-D-xylulose 5-phosphate. Position 20 (arginine 20) interacts with 3-amino-2-oxopropyl phosphate. Histidine 45 acts as the Proton acceptor in catalysis. 1-deoxy-D-xylulose 5-phosphate-binding residues include arginine 47 and histidine 52. The active-site Proton acceptor is the glutamate 72. Threonine 102 provides a ligand contact to 1-deoxy-D-xylulose 5-phosphate. Histidine 193 functions as the Proton donor in the catalytic mechanism. Residues glycine 194 and 215 to 216 (GH) contribute to the 3-amino-2-oxopropyl phosphate site.

It belongs to the PNP synthase family. Homooctamer; tetramer of dimers.

It is found in the cytoplasm. It catalyses the reaction 3-amino-2-oxopropyl phosphate + 1-deoxy-D-xylulose 5-phosphate = pyridoxine 5'-phosphate + phosphate + 2 H2O + H(+). It participates in cofactor biosynthesis; pyridoxine 5'-phosphate biosynthesis; pyridoxine 5'-phosphate from D-erythrose 4-phosphate: step 5/5. Functionally, catalyzes the complicated ring closure reaction between the two acyclic compounds 1-deoxy-D-xylulose-5-phosphate (DXP) and 3-amino-2-oxopropyl phosphate (1-amino-acetone-3-phosphate or AAP) to form pyridoxine 5'-phosphate (PNP) and inorganic phosphate. The chain is Pyridoxine 5'-phosphate synthase from Shigella dysenteriae serotype 1 (strain Sd197).